We begin with the raw amino-acid sequence, 183 residues long: Probable adenylyl-sulfate kinase (183 aa).

Residue 17-24 (GLPGSGKT) participates in ATP binding. Ser-91 (phosphoserine intermediate) is an active-site residue.

The protein belongs to the APS kinase family.

The enzyme catalyses adenosine 5'-phosphosulfate + ATP = 3'-phosphoadenylyl sulfate + ADP + H(+). It participates in sulfur metabolism; hydrogen sulfide biosynthesis; sulfite from sulfate: step 2/3. In terms of biological role, catalyzes the synthesis of activated sulfate. This is Probable adenylyl-sulfate kinase (cysC) from Aeropyrum pernix (strain ATCC 700893 / DSM 11879 / JCM 9820 / NBRC 100138 / K1).